The following is a 319-amino-acid chain: 1-aminocyclopropane-1-carboxylate oxidase 1 (319 aa).

The region spanning 153–253 (PNFGTKVSNY…RMSLASFYNP (101 aa)) is the Fe2OG dioxygenase domain. 3 residues coordinate Fe cation: His177, Asp179, and His234.

This sequence belongs to the iron/ascorbate-dependent oxidoreductase family. Requires Fe cation as cofactor.

It catalyses the reaction 1-aminocyclopropane-1-carboxylate + L-ascorbate + O2 = ethene + L-dehydroascorbate + hydrogen cyanide + CO2 + 2 H2O. Its pathway is alkene biosynthesis; ethylene biosynthesis via S-adenosyl-L-methionine; ethylene from S-adenosyl-L-methionine: step 2/2. The sequence is that of 1-aminocyclopropane-1-carboxylate oxidase 1 (ACO1) from Petunia hybrida (Petunia).